The chain runs to 626 residues: 1-deoxy-D-xylulose-5-phosphate synthase 2 (626 aa).

Thiamine diphosphate contacts are provided by residues H74 and 115 to 117 (GHA). D146 provides a ligand contact to Mg(2+). Residues 147-148 (GS), N175, F286, and E368 contribute to the thiamine diphosphate site. N175 contacts Mg(2+).

Belongs to the transketolase family. DXPS subfamily. Homodimer. It depends on Mg(2+) as a cofactor. Requires thiamine diphosphate as cofactor.

It carries out the reaction D-glyceraldehyde 3-phosphate + pyruvate + H(+) = 1-deoxy-D-xylulose 5-phosphate + CO2. It participates in metabolic intermediate biosynthesis; 1-deoxy-D-xylulose 5-phosphate biosynthesis; 1-deoxy-D-xylulose 5-phosphate from D-glyceraldehyde 3-phosphate and pyruvate: step 1/1. Functionally, catalyzes the acyloin condensation reaction between C atoms 2 and 3 of pyruvate and glyceraldehyde 3-phosphate to yield 1-deoxy-D-xylulose-5-phosphate (DXP). This Geobacter sulfurreducens (strain ATCC 51573 / DSM 12127 / PCA) protein is 1-deoxy-D-xylulose-5-phosphate synthase 2.